Reading from the N-terminus, the 390-residue chain is Lipid-A-disaccharide synthase (390 aa).

Belongs to the LpxB family.

The enzyme catalyses a lipid X + a UDP-2-N,3-O-bis[(3R)-3-hydroxyacyl]-alpha-D-glucosamine = a lipid A disaccharide + UDP + H(+). The protein operates within bacterial outer membrane biogenesis; LPS lipid A biosynthesis. Functionally, condensation of UDP-2,3-diacylglucosamine and 2,3-diacylglucosamine-1-phosphate to form lipid A disaccharide, a precursor of lipid A, a phosphorylated glycolipid that anchors the lipopolysaccharide to the outer membrane of the cell. The chain is Lipid-A-disaccharide synthase from Rickettsia felis (strain ATCC VR-1525 / URRWXCal2) (Rickettsia azadi).